Consider the following 349-residue polypeptide: 11-beta-hydroxysteroid dehydrogenase A (349 aa).

Residues 10–30 (LVAPPFTFFFLCLFLPPYWGL) traverse the membrane as a helical; Signal-anchor for type II membrane protein segment. The short motif at 13-26 (PPFTFFFLCLFLPP) is the Proline-knob element. NADP(+)-binding positions include 54 to 80 (GASSGIGEYLAYEYAKRGACLALSARR), D105, and 132 to 135 (NAAI). S184 serves as a coordination point for substrate. Y197 serves as the catalytic Proton acceptor. NADP(+) contacts are provided by residues 197-201 (YSASK) and K201.

This sequence belongs to the short-chain dehydrogenases/reductases (SDR) family. Expressed in seeds (at protein level).

The protein localises to the lipid droplet. It is found in the membrane. It catalyses the reaction an 11beta-hydroxysteroid + NADP(+) = an 11-oxosteroid + NADPH + H(+). Has dehydrogenase activity against 11 beta-hydroxysteroid and 17 beta-hydroxysteroid. May be involved in signal transduction regulated by various sterols. The polypeptide is 11-beta-hydroxysteroid dehydrogenase A (Arachis hypogaea (Peanut)).